Reading from the N-terminus, the 328-residue chain is DNA repair protein RAD51 homolog 4 (328 aa).

Positions 1-83 (MGVLRVGLCP…ELKTSTAILS (83 aa)) are preferentially binds ssDNA. Position 107 to 114 (107 to 114 (GGPGSGKT)) interacts with ATP.

This sequence belongs to the RecA family. RAD51 subfamily. Part of the BCDX2 complex consisting of RAD51B, RAD51C, RAD51D and XRCC2; the complex has a ring-like structure arranged into a flat disc around a central channel. In the absence of DNA, the BCDX2 subcomplex XRCC2:RAD51D formed a multimeric ring structure; in the presence of single-stranded DNA it formed a filamentous structure with the ssDNA. Interacts with SWSAP1 and ZSWIM7; involved in homologous recombination repair. Interacts with BLM; required for stimulation of BLM activity by the BCDX2 subcomplex XRCC2:RAD51D. Expressed in colon, prostate, spleen, testis, ovary, thymus and small intestine. Weakly expressed in leukocytes.

It localises to the nucleus. It is found in the cytoplasm. The protein resides in the cytoskeleton. The protein localises to the microtubule organizing center. Its subcellular location is the centrosome. It localises to the chromosome. It is found in the telomere. In terms of biological role, involved in the homologous recombination repair (HRR) pathway of double-stranded DNA breaks arising during DNA replication or induced by DNA-damaging agents. Bind to single-stranded DNA (ssDNA) and has DNA-dependent ATPase activity. Part of the RAD51 paralog protein complex BCDX2 which acts in the BRCA1-BRCA2-dependent HR pathway. Upon DNA damage, BCDX2 acts downstream of BRCA2 recruitment and upstream of RAD51 recruitment. BCDX2 binds predominantly to the intersection of the four duplex arms of the Holliday junction and to junction of replication forks. The BCDX2 complex was originally reported to bind single-stranded DNA, single-stranded gaps in duplex DNA and specifically to nicks in duplex DNA. Involved in telomere maintenance. The BCDX2 subcomplex XRCC2:RAD51D can stimulate Holliday junction resolution by BLM. In Homo sapiens (Human), this protein is DNA repair protein RAD51 homolog 4 (RAD51D).